A 277-amino-acid chain; its full sequence is Diaminopimelate epimerase (277 aa).

Substrate contacts are provided by N17, Q50, and N68. Residue C77 is the Proton donor of the active site. Substrate is bound by residues 78-79 (GN), N162, N195, and 213-214 (ER). Residue C222 is the Proton acceptor of the active site. 223 to 224 (GT) lines the substrate pocket.

It belongs to the diaminopimelate epimerase family. Homodimer.

It is found in the cytoplasm. The catalysed reaction is (2S,6S)-2,6-diaminopimelate = meso-2,6-diaminopimelate. Its pathway is amino-acid biosynthesis; L-lysine biosynthesis via DAP pathway; DL-2,6-diaminopimelate from LL-2,6-diaminopimelate: step 1/1. Functionally, catalyzes the stereoinversion of LL-2,6-diaminopimelate (L,L-DAP) to meso-diaminopimelate (meso-DAP), a precursor of L-lysine and an essential component of the bacterial peptidoglycan. The chain is Diaminopimelate epimerase from Phenylobacterium zucineum (strain HLK1).